The primary structure comprises 150 residues: Ribosome maturation factor RimP (150 aa).

Belongs to the RimP family.

It localises to the cytoplasm. Functionally, required for maturation of 30S ribosomal subunits. The sequence is that of Ribosome maturation factor RimP from Thermotoga sp. (strain RQ2).